Here is a 498-residue protein sequence, read N- to C-terminus: Galactose-1-phosphate uridylyltransferase (498 aa).

This sequence belongs to the galactose-1-phosphate uridylyltransferase type 2 family.

Its subcellular location is the cytoplasm. It carries out the reaction alpha-D-galactose 1-phosphate + UDP-alpha-D-glucose = alpha-D-glucose 1-phosphate + UDP-alpha-D-galactose. It functions in the pathway carbohydrate metabolism; galactose metabolism. The sequence is that of Galactose-1-phosphate uridylyltransferase from Staphylococcus carnosus (strain TM300).